A 513-amino-acid chain; its full sequence is Light-independent protochlorophyllide reductase subunit B (513 aa).

Position 36 (Asp36) interacts with [4Fe-4S] cluster. Catalysis depends on Asp274, which acts as the Proton donor. Residue 409-410 (GL) participates in substrate binding. A disordered region spans residues 426–457 (DAAGPSHHGGHSPKPQAAEPAPQAAPQPENTG). A compositionally biased stretch (low complexity) spans 440–454 (PQAAEPAPQAAPQPE).

Belongs to the ChlB/BchB/BchZ family. As to quaternary structure, protochlorophyllide reductase is composed of three subunits; BchL, BchN and BchB. Forms a heterotetramer of two BchB and two BchN subunits. Requires [4Fe-4S] cluster as cofactor.

It carries out the reaction chlorophyllide a + oxidized 2[4Fe-4S]-[ferredoxin] + 2 ADP + 2 phosphate = protochlorophyllide a + reduced 2[4Fe-4S]-[ferredoxin] + 2 ATP + 2 H2O. It participates in porphyrin-containing compound metabolism; bacteriochlorophyll biosynthesis (light-independent). In terms of biological role, component of the dark-operative protochlorophyllide reductase (DPOR) that uses Mg-ATP and reduced ferredoxin to reduce ring D of protochlorophyllide (Pchlide) to form chlorophyllide a (Chlide). This reaction is light-independent. The NB-protein (BchN-BchB) is the catalytic component of the complex. The sequence is that of Light-independent protochlorophyllide reductase subunit B from Roseobacter denitrificans (strain ATCC 33942 / OCh 114) (Erythrobacter sp. (strain OCh 114)).